A 504-amino-acid polypeptide reads, in one-letter code: Dolichol kinase sec59 (504 aa).

At 1 to 55 (MYIMSKKCYDTSEKIDREQECVEVNYQHRNFESILEIFSVLFIPFLCNSGKKFLQ) the chain is on the cytoplasmic side. The helical transmembrane segment at 56–76 (ISNASFFLPACFYLLGSSSII) threads the bilayer. A topological domain (lumenal) is located at residue Gln77. The chain crosses the membrane as a helical span at residues 78–98 (LYEPLLWLSSFPFCILYVGFG). Residues 99–157 (ENSVLYHEMYTVCLYNALLSLTQRWKWLSIVLDGLGNSSVNLKLHETVILAFLEITQNS) are Cytoplasmic-facing. A helical transmembrane segment spans residues 158 to 178 (FTFIEGILICTGLTGLCFATF). Residues 179–187 (SYEVSPVVS) lie on the Lumenal side of the membrane. The chain crosses the membrane as a helical span at residues 188 to 208 (VLSGVLLISLPTLILLNLCIL). The Cytoplasmic portion of the chain corresponds to 209-215 (KLAAKLH). The chain crosses the membrane as a helical span at residues 216 to 236 (LSALFTTCLIYFFSALLVFLV). Residues 237 to 263 (SRSWVAGQLGQAPEVWLFNQIFSHRNS) lie on the Lumenal side of the membrane. A helical membrane pass occupies residues 264–284 (LTRIKIIIWWIICLGCFIFIL). The Cytoplasmic segment spans residues 285–325 (LRSNRNNPLGKYFTTEDEVLNFRRKTYHALVVFLFLPVCCL). A helical transmembrane segment spans residues 326–347 (DPHFLHLSFSGVLFIFLFVEGI). Over 348-373 (RILRLKPFGKMIHEFLWEYTDNRDHK) the chain is Lumenal. A helical transmembrane segment spans residues 374 to 394 (GPLIISHIYLLIGCAIPIWLS). Residues 395-403 (NALKGPVAS) lie on the Cytoplasmic side of the membrane. The helical transmembrane segment at 404–424 (VELLVGVLCLGCGDSMASIIG) threads the bilayer. The Lumenal segment spans residues 425–440 (KRFGKHRISKTNKSIE). Residues 441 to 461 (GVFAFSISVFLVLHLTQAFHV) traverse the membrane as a helical segment. Position 462 (Cys462) is a topological domain, cytoplasmic. A helical transmembrane segment spans residues 463–483 (PSVTFWKTLFMSLCTAILEGV). Residues 484 to 504 (STENDNLILPMYMWVLYQALD) are Lumenal-facing.

Belongs to the polyprenol kinase family.

The protein localises to the endoplasmic reticulum membrane. The catalysed reaction is a di-trans,poly-cis-dolichol + CTP = a di-trans,poly-cis-dolichyl phosphate + CDP + H(+). It participates in protein modification; protein glycosylation. In terms of biological role, catalyzes CTP-mediated phosphorylation of dolichol, the terminal step in de novo dolichyl monophosphate (Dol-P) biosynthesis. Dol-P is a lipid carrier essential for the synthesis of N-linked and O-linked oligosaccharides and for GPI anchors. This is Dolichol kinase sec59 from Schizosaccharomyces pombe (strain 972 / ATCC 24843) (Fission yeast).